The sequence spans 306 residues: Pantothenate kinase (306 aa).

91–98 (GSVAVGKS) is a binding site for ATP.

This sequence belongs to the prokaryotic pantothenate kinase family.

It localises to the cytoplasm. The catalysed reaction is (R)-pantothenate + ATP = (R)-4'-phosphopantothenate + ADP + H(+). It participates in cofactor biosynthesis; coenzyme A biosynthesis; CoA from (R)-pantothenate: step 1/5. The protein is Pantothenate kinase of Streptococcus equi subsp. equi (strain 4047).